The primary structure comprises 282 residues: MTLIDGKKLSIDLKERLTDQLREYKEQTGIVPKLVAIIVGDDPASKTYVGSKEKACEKVGINSEVITLPEATTEQELLELIDKLNDDSSVHAILVQLPLPTHINKQKVIYAIKPEKDVDGFHPANVGRLQLRDKKCLESCTPKGILTMLKEYGIQTEGAHAVVVGASNVVGKPVSQLLLNAKATVTTCHRFTKDLKSHTTKADILVVAVGKPGFITADMVKDGAVVIDVGINHVDGKIVGDVDFEAVKDKVAAITPVPGGVGPMTITELLYNTFQCAQELNR.

NADP(+)-binding positions include glycine 165–serine 167 and isoleucine 231.

Belongs to the tetrahydrofolate dehydrogenase/cyclohydrolase family. Homodimer.

The enzyme catalyses (6R)-5,10-methylene-5,6,7,8-tetrahydrofolate + NADP(+) = (6R)-5,10-methenyltetrahydrofolate + NADPH. It carries out the reaction (6R)-5,10-methenyltetrahydrofolate + H2O = (6R)-10-formyltetrahydrofolate + H(+). Its pathway is one-carbon metabolism; tetrahydrofolate interconversion. Catalyzes the oxidation of 5,10-methylenetetrahydrofolate to 5,10-methenyltetrahydrofolate and then the hydrolysis of 5,10-methenyltetrahydrofolate to 10-formyltetrahydrofolate. The polypeptide is Bifunctional protein FolD (Francisella philomiragia subsp. philomiragia (strain ATCC 25017 / CCUG 19701 / FSC 153 / O#319-036)).